A 480-amino-acid polypeptide reads, in one-letter code: Ribulose bisphosphate carboxylase large chain (480 aa).

A propeptide spanning residues 1-2 (MS) is cleaved from the precursor. An N-acetylproline modification is found at P3. K14 is subject to N6,N6,N6-trimethyllysine. Residues N123 and T173 each coordinate substrate. K175 acts as the Proton acceptor in catalysis. Residue K177 participates in substrate binding. 3 residues coordinate Mg(2+): K201, D203, and E204. At K201 the chain carries N6-carboxylysine. H294 acts as the Proton acceptor in catalysis. Positions 295, 327, and 379 each coordinate substrate.

This sequence belongs to the RuBisCO large chain family. Type I subfamily. Heterohexadecamer of 8 large chains and 8 small chains; disulfide-linked. The disulfide link is formed within the large subunit homodimers. Requires Mg(2+) as cofactor. Post-translationally, the disulfide bond which can form in the large chain dimeric partners within the hexadecamer appears to be associated with oxidative stress and protein turnover.

It localises to the plastid. It is found in the chloroplast. The catalysed reaction is 2 (2R)-3-phosphoglycerate + 2 H(+) = D-ribulose 1,5-bisphosphate + CO2 + H2O. It catalyses the reaction D-ribulose 1,5-bisphosphate + O2 = 2-phosphoglycolate + (2R)-3-phosphoglycerate + 2 H(+). Its function is as follows. RuBisCO catalyzes two reactions: the carboxylation of D-ribulose 1,5-bisphosphate, the primary event in carbon dioxide fixation, as well as the oxidative fragmentation of the pentose substrate in the photorespiration process. Both reactions occur simultaneously and in competition at the same active site. The protein is Ribulose bisphosphate carboxylase large chain of Phalaenopsis aphrodite subsp. formosana (Moth orchid).